We begin with the raw amino-acid sequence, 157 residues long: MPSVESFELDHTIVKAPYVRHCGVHQVGSDGIVNKFDIRFCQPNKQAMKPDVIHTLEHLLAFNLRKYIDRYPHFDIIDISPMGCQTGYYLVVSGTPTVREIIDLLELTLKDAVQITEIPAANETQCGQAKLHDLEGAKRLMNFWLSQDKDDLEKVFG.

Residues histidine 54, histidine 58, and cysteine 126 each contribute to the Fe cation site.

Belongs to the LuxS family. As to quaternary structure, homodimer. Requires Fe cation as cofactor.

The catalysed reaction is S-(5-deoxy-D-ribos-5-yl)-L-homocysteine = (S)-4,5-dihydroxypentane-2,3-dione + L-homocysteine. In terms of biological role, involved in the synthesis of autoinducer 2 (AI-2) which is secreted by bacteria and is used to communicate both the cell density and the metabolic potential of the environment. The regulation of gene expression in response to changes in cell density is called quorum sensing. Catalyzes the transformation of S-ribosylhomocysteine (RHC) to homocysteine (HC) and 4,5-dihydroxy-2,3-pentadione (DPD). This Bacillus cytotoxicus (strain DSM 22905 / CIP 110041 / 391-98 / NVH 391-98) protein is S-ribosylhomocysteine lyase.